The sequence spans 263 residues: Endonuclease 8 (263 aa).

Catalysis depends on Pro2, which acts as the Schiff-base intermediate with DNA. Glu3 serves as the catalytic Proton donor. Lys53 serves as the catalytic Proton donor; for beta-elimination activity. Gln70, Arg125, and Asn169 together coordinate DNA. An FPG-type zinc finger spans residues Lys229–His263. Arg253 functions as the Proton donor; for delta-elimination activity in the catalytic mechanism.

Belongs to the FPG family. The cofactor is Zn(2+).

The catalysed reaction is 2'-deoxyribonucleotide-(2'-deoxyribose 5'-phosphate)-2'-deoxyribonucleotide-DNA = a 3'-end 2'-deoxyribonucleotide-(2,3-dehydro-2,3-deoxyribose 5'-phosphate)-DNA + a 5'-end 5'-phospho-2'-deoxyribonucleoside-DNA + H(+). In terms of biological role, involved in base excision repair of DNA damaged by oxidation or by mutagenic agents. Acts as a DNA glycosylase that recognizes and removes damaged bases. Has a preference for oxidized pyrimidines, such as thymine glycol, 5,6-dihydrouracil and 5,6-dihydrothymine. Has AP (apurinic/apyrimidinic) lyase activity and introduces nicks in the DNA strand. Cleaves the DNA backbone by beta-delta elimination to generate a single-strand break at the site of the removed base with both 3'- and 5'-phosphates. In Escherichia coli (strain UTI89 / UPEC), this protein is Endonuclease 8.